The following is a 389-amino-acid chain: Globin-like protein 6 (389 aa).

Residues 1–15 show a composition bias toward polar residues; sequence MGNQSTKSTHGTTRV. Disordered regions lie at residues 1–38, 96–123, and 143–185; these read MGNQ…RSAS, RTSK…SVDS, and TVSS…SSNP. A compositionally biased stretch (basic residues) spans 16 to 25; sequence SHSKSAHHNS. Residues 196 to 347 enclose the Globin domain; it reads HLTQPQILFV…VTEQLKEGFQ (152 aa). Heme b contacts are provided by His-254 and His-286. A disordered region spans residues 367–389; it reads SSFEISTKTKQSDMKRFHTLDNM. The segment covering 376–389 has biased composition (basic and acidic residues); that stretch reads KQSDMKRFHTLDNM.

The protein belongs to the globin family. In terms of tissue distribution, expressed in the head and tail neurons and nerve cord.

May play a role as physiological sensor for oxygen via redox signaling and/or electron transport. The polypeptide is Globin-like protein 6 (Caenorhabditis elegans).